The primary structure comprises 283 residues: Pantothenate synthetase (283 aa).

30 to 37 lines the ATP pocket; the sequence is MGNLHDGH. The active-site Proton donor is histidine 37. Position 61 (glutamine 61) interacts with (R)-pantoate. Glutamine 61 is a binding site for beta-alanine. Residue 149–152 coordinates ATP; that stretch reads GEKD. Glutamine 155 provides a ligand contact to (R)-pantoate. Residue 186–189 participates in ATP binding; that stretch reads LSSR.

The protein belongs to the pantothenate synthetase family. In terms of assembly, homodimer.

It localises to the cytoplasm. It catalyses the reaction (R)-pantoate + beta-alanine + ATP = (R)-pantothenate + AMP + diphosphate + H(+). Its pathway is cofactor biosynthesis; (R)-pantothenate biosynthesis; (R)-pantothenate from (R)-pantoate and beta-alanine: step 1/1. Functionally, catalyzes the condensation of pantoate with beta-alanine in an ATP-dependent reaction via a pantoyl-adenylate intermediate. The chain is Pantothenate synthetase from Escherichia coli O6:K15:H31 (strain 536 / UPEC).